Consider the following 380-residue polypeptide: NF-kappa-B inhibitor-like protein 1 (380 aa).

The tract at residues Met1–Glu34 is disordered. Over residues Ala13 to Ser28 the composition is skewed to polar residues. ANK repeat units lie at residues Gly64–His93 and His97–Lys133. Disordered stretches follow at residues Lys131–Gln167 and Glu185–Leu293. Ser150 is modified (phosphoserine). Positions Ser150–Ala159 are enriched in acidic residues. Basic and acidic residues-rich tracts occupy residues Arg204 to Gly221 and Arg236 to Val272.

As to quaternary structure, interacts with CACTIN (via N-terminal domain); the interaction occurs in a pro-inflammatory-independent manner.

The protein localises to the nucleus. In terms of biological role, involved in the regulation of innate immune response. Acts as negative regulator of Toll-like receptor and interferon-regulatory factor (IRF) signaling pathways. Contributes to the negative regulation of transcriptional activation of NF-kappa-B target genes in response to endogenous pro-inflammatory stimuli. The polypeptide is NF-kappa-B inhibitor-like protein 1 (NFKBIL1) (Sus scrofa (Pig)).